We begin with the raw amino-acid sequence, 441 residues long: Xylose isomerase (441 aa).

Residues His-105 and Asp-108 contribute to the active site. Residues Glu-236, Glu-272, His-275, Asp-300, Asp-311, Asp-313, and Asp-343 each contribute to the Mg(2+) site.

The protein belongs to the xylose isomerase family. As to quaternary structure, homotetramer. Requires Mg(2+) as cofactor.

The protein resides in the cytoplasm. It carries out the reaction alpha-D-xylose = alpha-D-xylulofuranose. In Mesorhizobium japonicum (strain LMG 29417 / CECT 9101 / MAFF 303099) (Mesorhizobium loti (strain MAFF 303099)), this protein is Xylose isomerase.